The sequence spans 418 residues: Gamma-glutamyl phosphate reductase (418 aa).

Positions M1–S18 are enriched in basic and acidic residues. The disordered stretch occupies residues M1 to S22.

This sequence belongs to the gamma-glutamyl phosphate reductase family.

Its subcellular location is the cytoplasm. It catalyses the reaction L-glutamate 5-semialdehyde + phosphate + NADP(+) = L-glutamyl 5-phosphate + NADPH + H(+). It functions in the pathway amino-acid biosynthesis; L-proline biosynthesis; L-glutamate 5-semialdehyde from L-glutamate: step 2/2. Its function is as follows. Catalyzes the NADPH-dependent reduction of L-glutamate 5-phosphate into L-glutamate 5-semialdehyde and phosphate. The product spontaneously undergoes cyclization to form 1-pyrroline-5-carboxylate. This chain is Gamma-glutamyl phosphate reductase, found in Syntrophus aciditrophicus (strain SB).